We begin with the raw amino-acid sequence, 136 residues long: Methylglyoxal synthase (136 aa).

One can recognise an MGS-like domain in the interval 1–136 (MKIALIAHDR…REVVREENEA (136 aa)). Substrate is bound by residues H8, K12, 34 to 37 (TGTT), and 54 to 55 (SG). D60 acts as the Proton donor/acceptor in catalysis. H87 lines the substrate pocket.

Belongs to the methylglyoxal synthase family.

It carries out the reaction dihydroxyacetone phosphate = methylglyoxal + phosphate. Functionally, catalyzes the formation of methylglyoxal from dihydroxyacetone phosphate. The polypeptide is Methylglyoxal synthase (Brevibacillus brevis (strain 47 / JCM 6285 / NBRC 100599)).